A 218-amino-acid polypeptide reads, in one-letter code: Molybdenum cofactor guanylyltransferase (218 aa).

Residues 16–18 (LAG), Lys-28, Asn-56, Asp-74, and Asp-109 each bind GTP. Asp-109 serves as a coordination point for Mg(2+).

The protein belongs to the MobA family. Monomer. The cofactor is Mg(2+).

The protein localises to the cytoplasm. The catalysed reaction is Mo-molybdopterin + GTP + H(+) = Mo-molybdopterin guanine dinucleotide + diphosphate. Transfers a GMP moiety from GTP to Mo-molybdopterin (Mo-MPT) cofactor (Moco or molybdenum cofactor) to form Mo-molybdopterin guanine dinucleotide (Mo-MGD) cofactor. This is Molybdenum cofactor guanylyltransferase from Rhizobium meliloti (strain 1021) (Ensifer meliloti).